A 373-amino-acid chain; its full sequence is 8-amino-7-oxononanoate synthase (373 aa).

Residue arginine 16 participates in substrate binding. A pyridoxal 5'-phosphate-binding site is contributed by 93–94 (GF). Histidine 118 serves as a coordination point for substrate. Residues serine 165, 190–193 (DEAH), and 222–225 (TFSK) each bind pyridoxal 5'-phosphate. Lysine 225 carries the N6-(pyridoxal phosphate)lysine modification. Residue threonine 334 coordinates substrate.

This sequence belongs to the class-II pyridoxal-phosphate-dependent aminotransferase family. BioF subfamily. In terms of assembly, homodimer. It depends on pyridoxal 5'-phosphate as a cofactor.

The catalysed reaction is 6-carboxyhexanoyl-[ACP] + L-alanine + H(+) = (8S)-8-amino-7-oxononanoate + holo-[ACP] + CO2. It functions in the pathway cofactor biosynthesis; biotin biosynthesis. Functionally, catalyzes the decarboxylative condensation of pimeloyl-[acyl-carrier protein] and L-alanine to produce 8-amino-7-oxononanoate (AON), [acyl-carrier protein], and carbon dioxide. The chain is 8-amino-7-oxononanoate synthase from Helicobacter pylori (strain J99 / ATCC 700824) (Campylobacter pylori J99).